The primary structure comprises 378 residues: Glutamate 5-kinase (378 aa).

Residue Lys-19 coordinates ATP. Substrate contacts are provided by Ser-59, Asp-146, and Asn-158. ATP is bound by residues 178–179 (TD) and 220–226 (TGGMATK). Residues 285–363 (QGQIQVDAGA…GEIGEILGYK (79 aa)) form the PUA domain.

This sequence belongs to the glutamate 5-kinase family.

It localises to the cytoplasm. It catalyses the reaction L-glutamate + ATP = L-glutamyl 5-phosphate + ADP. It functions in the pathway amino-acid biosynthesis; L-proline biosynthesis; L-glutamate 5-semialdehyde from L-glutamate: step 1/2. Catalyzes the transfer of a phosphate group to glutamate to form L-glutamate 5-phosphate. The protein is Glutamate 5-kinase of Moorella thermoacetica (strain ATCC 39073 / JCM 9320).